The sequence spans 548 residues: 2-succinyl-5-enolpyruvyl-6-hydroxy-3-cyclohexene-1-carboxylate synthase (548 aa).

This sequence belongs to the TPP enzyme family. MenD subfamily. In terms of assembly, homodimer. It depends on Mg(2+) as a cofactor. Mn(2+) serves as cofactor. Thiamine diphosphate is required as a cofactor.

It carries out the reaction isochorismate + 2-oxoglutarate + H(+) = 5-enolpyruvoyl-6-hydroxy-2-succinyl-cyclohex-3-ene-1-carboxylate + CO2. The protein operates within quinol/quinone metabolism; 1,4-dihydroxy-2-naphthoate biosynthesis; 1,4-dihydroxy-2-naphthoate from chorismate: step 2/7. It participates in quinol/quinone metabolism; menaquinone biosynthesis. Functionally, catalyzes the thiamine diphosphate-dependent decarboxylation of 2-oxoglutarate and the subsequent addition of the resulting succinic semialdehyde-thiamine pyrophosphate anion to isochorismate to yield 2-succinyl-5-enolpyruvyl-6-hydroxy-3-cyclohexene-1-carboxylate (SEPHCHC). The sequence is that of 2-succinyl-5-enolpyruvyl-6-hydroxy-3-cyclohexene-1-carboxylate synthase from Mycobacterium ulcerans (strain Agy99).